Here is a 121-residue protein sequence, read N- to C-terminus: Basic phospholipase A2 homolog piratoxin-1 (121 aa).

7 disulfide bridges follow: cysteine 26-cysteine 115, cysteine 28-cysteine 44, cysteine 43-cysteine 95, cysteine 49-cysteine 121, cysteine 50-cysteine 88, cysteine 57-cysteine 81, and cysteine 75-cysteine 86. The tract at residues 105-117 (KLYRYHLKPFCKK) is important for membrane-damaging activities in eukaryotes and bacteria; heparin-binding.

Belongs to the phospholipase A2 family. Group II subfamily. K49 sub-subfamily. Homodimer; non-covalently linked. In terms of tissue distribution, expressed by the venom gland.

The protein resides in the secreted. Rosmarinic acid inhibits the myotoxic activity. Bromophenacyl bromide (BPB) inhibits the myotoxic activity through a covalent binding. Caffeic acid and aristolochic acid, two plant compounds used in folk medicine used to treat envenomation, inhibit the myotoxic activity. In terms of biological role, snake venom phospholipase A2 (PLA2) homolog that lacks enzymatic activity. Is myotoxic and displays edema-inducing activities. Induces neuromuscular blockage. A model of myotoxic mechanism has been proposed: an apo Lys49-PLA2 is activated by the entrance of a hydrophobic molecule (e.g. fatty acid) at the hydrophobic channel of the protein leading to a reorientation of a monomer. This reorientation causes a transition between 'inactive' to 'active' states, causing alignment of C-terminal and membrane-docking sites (MDoS) side-by-side and putting the membrane-disruption sites (MDiS) in the same plane, exposed to solvent and in a symmetric position for both monomers. The MDoS region stabilizes the toxin on membrane by the interaction of charged residues with phospholipid head groups. Subsequently, the MDiS region destabilizes the membrane with penetration of hydrophobic residues. This insertion causes a disorganization of the membrane, allowing an uncontrolled influx of ions (i.e. calcium and sodium), and eventually triggering irreversible intracellular alterations and cell death. This Bothrops pirajai (Piraja's lancehead) protein is Basic phospholipase A2 homolog piratoxin-1.